The following is a 144-amino-acid chain: 3-dehydroquinate dehydratase (144 aa).

Tyr22 functions as the Proton acceptor in the catalytic mechanism. Positions 73, 79, and 86 each coordinate substrate. The active-site Proton donor is His99. Residues 100–101 and Arg110 contribute to the substrate site; that span reads LS.

The protein belongs to the type-II 3-dehydroquinase family. As to quaternary structure, homododecamer.

The enzyme catalyses 3-dehydroquinate = 3-dehydroshikimate + H2O. It functions in the pathway metabolic intermediate biosynthesis; chorismate biosynthesis; chorismate from D-erythrose 4-phosphate and phosphoenolpyruvate: step 3/7. Its function is as follows. Catalyzes a trans-dehydration via an enolate intermediate. This chain is 3-dehydroquinate dehydratase, found in Trichlorobacter lovleyi (strain ATCC BAA-1151 / DSM 17278 / SZ) (Geobacter lovleyi).